A 126-amino-acid polypeptide reads, in one-letter code: Small ribosomal subunit protein uS8 (126 aa).

Belongs to the universal ribosomal protein uS8 family. Part of the 30S ribosomal subunit. Contacts proteins S5 and S12.

One of the primary rRNA binding proteins, it binds directly to 16S rRNA central domain where it helps coordinate assembly of the platform of the 30S subunit. In Nitratidesulfovibrio vulgaris (strain DSM 19637 / Miyazaki F) (Desulfovibrio vulgaris), this protein is Small ribosomal subunit protein uS8.